The chain runs to 471 residues: Glutamate--tRNA ligase 1 (471 aa).

The 'HIGH' region motif lies at P15–G25. Positions K243–R247 match the 'KMSKS' region motif. K246 is an ATP binding site.

This sequence belongs to the class-I aminoacyl-tRNA synthetase family. Glutamate--tRNA ligase type 1 subfamily. As to quaternary structure, monomer.

It is found in the cytoplasm. It catalyses the reaction tRNA(Glu) + L-glutamate + ATP = L-glutamyl-tRNA(Glu) + AMP + diphosphate. Its function is as follows. Catalyzes the attachment of glutamate to tRNA(Glu) in a two-step reaction: glutamate is first activated by ATP to form Glu-AMP and then transferred to the acceptor end of tRNA(Glu). The protein is Glutamate--tRNA ligase 1 of Cereibacter sphaeroides (strain ATCC 17029 / ATH 2.4.9) (Rhodobacter sphaeroides).